Consider the following 402-residue polypeptide: Non-homologous end joining protein Ku (402 aa).

In terms of domain architecture, Ku spans 12–185 (ISFGLVTIPV…VAALTGIAQP (174 aa)). The segment at 261–402 (QRAAGGATGG…GPDETAPGGP (142 aa)) is disordered. 2 stretches are compositionally biased toward low complexity: residues 299–308 (GDPAASVPGV) and 332–343 (VPGVPATAVPGT). Residues 344 to 358 (PGAPVPTAPGVPSAP) are compositionally biased toward pro residues. Over residues 359-376 (APGTSPTSVPGVQTAPNG) the composition is skewed to low complexity.

Belongs to the prokaryotic Ku family. Homodimer. Interacts with LigD.

Its function is as follows. With LigD forms a non-homologous end joining (NHEJ) DNA repair enzyme, which repairs dsDNA breaks with reduced fidelity. Binds linear dsDNA with 5'- and 3'- overhangs but not closed circular dsDNA nor ssDNA. Recruits and stimulates the ligase activity of LigD. The polypeptide is Non-homologous end joining protein Ku (Symbiobacterium thermophilum (strain DSM 24528 / JCM 14929 / IAM 14863 / T)).